The primary structure comprises 156 residues: Large ribosomal subunit protein uL15 (156 aa).

Residues 26–46 (GIGCGKGKTSGRGHKGQKARS) are disordered. Basic residues predominate over residues 34 to 43 (TSGRGHKGQK).

This sequence belongs to the universal ribosomal protein uL15 family. As to quaternary structure, part of the 50S ribosomal subunit.

Its function is as follows. Binds to the 23S rRNA. The polypeptide is Large ribosomal subunit protein uL15 (Ehrlichia canis (strain Jake)).